Reading from the N-terminus, the 295-residue chain is Sulfotransferase 1 family member D1 (295 aa).

Residue 48–53 (KSGTTW) coordinates 3'-phosphoadenylyl sulfate. Residues Phe-81 and 106 to 108 (KTH) contribute to the substrate site. His-108 acts as the Proton acceptor in catalysis. 3'-phosphoadenylyl sulfate-binding residues include Arg-130 and Ser-138. Position 142 (Phe-142) interacts with substrate. Residues Tyr-193, Ser-227, and 257 to 259 (RKG) contribute to the 3'-phosphoadenylyl sulfate site.

The protein belongs to the sulfotransferase 1 family.

It is found in the cytoplasm. Sulfotransferase with broad substrate specificity that utilizes 3'-phospho-5'-adenylyl sulfate (PAPS) as sulfonate donor to catalyze the sulfate conjugation of catecholamines, such as dopamine, prostaglandins, leukotriene E4, drugs and xenobiotic compounds. Has sulfotransferase activity towards p-nitrophenol, 2-naphthylamine and minoxidil (in vitro). Sulfonation increases the water solubility of most compounds, and therefore their renal excretion, but it can also result in bioactivation to form active metabolites. The sequence is that of Sulfotransferase 1 family member D1 (Sult1d1) from Rattus norvegicus (Rat).